The primary structure comprises 218 residues: Peroxiredoxin-like 2A (218 aa).

Residues 3–101 (MWSIGAGAIG…DELGVPLYAV (99 aa)) are thioredoxin fold. Catalysis depends on redox-active residues Cys74 and Cys77.

This sequence belongs to the peroxiredoxin-like PRXL2 family. PRXL2A subfamily.

It localises to the cytoplasm. Its subcellular location is the secreted. Involved in redox regulation of the cell. Acts as an antioxidant. Inhibits TNFSF11-induced NFKB1 and JUN activation and osteoclast differentiation. May affect bone resorption and help to maintain bone mass. Acts as a negative regulator of macrophage-mediated inflammation by inhibiting macrophage production of inflammatory cytokines, probably through suppression of the MAPK signaling pathway. This Bos taurus (Bovine) protein is Peroxiredoxin-like 2A (PRXL2A).